A 255-amino-acid chain; its full sequence is Small ribosomal subunit protein uS2 (255 aa).

Positions 230 to 255 are disordered; sequence QSSSGRDLGASSEVPVEPALEEAAEG.

It belongs to the universal ribosomal protein uS2 family.

This Rhizobium etli (strain CIAT 652) protein is Small ribosomal subunit protein uS2.